A 264-amino-acid chain; its full sequence is Tetraspanin-12 (264 aa).

Topologically, residues 1–13 are cytoplasmic; sequence MLRLSNAAVITTN. Residues 14–34 traverse the membrane as a helical segment; the sequence is AILALIGLAALSFSVYVYVQG. The Extracellular segment spans residues 35-45; sequence PSQCQRFVQNP. A helical membrane pass occupies residues 46-66; sequence LIVTAALLFFISSLGLIAALY. Residues 67–75 are Cytoplasmic-facing; that stretch reads GSHIIITLY. A helical membrane pass occupies residues 76–96; the sequence is LFFLFLSILLLLVLSVFIFLV. The Extracellular segment spans residues 97 to 228; sequence TNPTAGKALS…VLKGIRKRWR (132 aa). Asn-180 carries N-linked (GlcNAc...) asparagine glycosylation. A helical transmembrane segment spans residues 229 to 249; that stretch reads ILIVVNLLLILLVVFLYSCGC. The Cytoplasmic segment spans residues 250-264; sequence CVRKNNRVPWKRRFF.

This sequence belongs to the tetraspanin (TM4SF) family.

It is found in the membrane. Functionally, may be involved in the regulation of cell differentiation. In Arabidopsis thaliana (Mouse-ear cress), this protein is Tetraspanin-12 (TET12).